We begin with the raw amino-acid sequence, 307 residues long: Acetaldehyde dehydrogenase (307 aa).

12 to 15 provides a ligand contact to NAD(+); sequence SGNI. Cys130 acts as the Acyl-thioester intermediate in catalysis. NAD(+) contacts are provided by residues 161–169 and Asn272; that span reads SVGPGTRQN.

The protein belongs to the acetaldehyde dehydrogenase family.

It catalyses the reaction acetaldehyde + NAD(+) + CoA = acetyl-CoA + NADH + H(+). In Shewanella pealeana (strain ATCC 700345 / ANG-SQ1), this protein is Acetaldehyde dehydrogenase.